Consider the following 657-residue polypeptide: MNPLLELLDVHRTYQIGETTVNALRGVSLTIDRGEFVAIMGASGSGKSSLLQILGLLDNPDKGEFKILGNNVNTLSEDEQAGVRNNVAGFVFQQFHLLKRMTIVDNVRLPHIYSGLKGDFRQEAIARLKLVGLEERIDHTPNQLSGGEQQRVAIARALVRDPLIIFADEPTGNLDSKNSAEIMKIFTALHEEGKTIIMVTHENDIAAYACRVIIMKDGLIVSDERKAEMQPSRAVTGESAFDISGSGKGSIWQDGRFTGFMAQAFQSILANKMRTFLSVLGIFVGVASVIAMMALGEGAKSAMQEQLKSMGSNMLSIRGGSAKIRGAAQGAGAVARFSFNDVNDIASLGKLVKNASGVVNGSARIVYGNKNWSSTLTGVGFDYGTMRASIPAIGRWFTREEIQIREKSAIIGVTVVKEIFGSSNPIGKTIKINRINFKVIGIAPAKGFSGPQDEDDVVIIPVTTAMYRVLGKDYLSSIFVEVASPGLMGQAKTAITELIRKKHRLEEGDDSFNIRDMTEIQKMLSSTTQTMSLLLGSIAAISLLVGGIGIMNIMLVSVTERTREIGLRKAIGARKNDIMLQFLIESVGMTISGGLIGVFAGVGISLILAFFAGWAVKTSLLSVVLATTFSALIGVFFGLWPARKAAALKPVEALRYE.

Positions 5–242 (LELLDVHRTY…RAVTGESAFD (238 aa)) constitute an ABC transporter domain. Position 41 to 48 (41 to 48 (GASGSGKS)) interacts with ATP. 4 consecutive transmembrane segments (helical) span residues 276 to 296 (FLSV…MALG), 538 to 558 (IAAI…LVSV), 596 to 616 (IGVF…GWAV), and 620 to 640 (LLSV…FGLW).

Belongs to the ABC transporter superfamily. Macrolide exporter (TC 3.A.1.122) family. Homodimer.

It localises to the cell inner membrane. Non-canonical ABC transporter that contains transmembrane domains (TMD), which form a pore in the inner membrane, and an ATP-binding domain (NBD), which is responsible for energy generation. Confers resistance against macrolides. The chain is Macrolide export ATP-binding/permease protein MacB from Chlorobium phaeobacteroides (strain DSM 266 / SMG 266 / 2430).